The chain runs to 380 residues: Cytochrome b (380 aa).

The next 4 membrane-spanning stretches (helical) occupy residues 34-54, 78-99, 114-134, and 179-199; these read FGSLLGICLATQILTGLLLAM, WLIRNLHANGASFFFICIYLHI, WNTGILLLLTLMATAFVGYVL, and FFALHFLLPFVIAGLTLIHLT. Residues histidine 84 and histidine 98 each contribute to the heme b site. Residues histidine 183 and histidine 197 each contribute to the heme b site. Histidine 202 contacts a ubiquinone. A run of 4 helical transmembrane segments spans residues 227–247, 289–309, 321–341, and 348–368; these read LKDILGFMLMFLSLTTLALFS, LGGVLALAASVLMMFLSPLLH, LSQLLFWTLVANLFILTWVGS, and FIIIGQLASFTYFTILLILLP.

This sequence belongs to the cytochrome b family. As to quaternary structure, the cytochrome bc1 complex contains 11 subunits: 3 respiratory subunits (MT-CYB, CYC1 and UQCRFS1), 2 core proteins (UQCRC1 and UQCRC2) and 6 low-molecular weight proteins (UQCRH/QCR6, UQCRB/QCR7, UQCRQ/QCR8, UQCR10/QCR9, UQCR11/QCR10 and a cleavage product of UQCRFS1). This cytochrome bc1 complex then forms a dimer. Requires heme b as cofactor.

Its subcellular location is the mitochondrion inner membrane. Functionally, component of the ubiquinol-cytochrome c reductase complex (complex III or cytochrome b-c1 complex) that is part of the mitochondrial respiratory chain. The b-c1 complex mediates electron transfer from ubiquinol to cytochrome c. Contributes to the generation of a proton gradient across the mitochondrial membrane that is then used for ATP synthesis. The protein is Cytochrome b (MT-CYB) of Pelagodroma marina (White-faced storm-petrel).